The primary structure comprises 113 residues: Holo-[acyl-carrier-protein] synthase (113 aa).

Mg(2+) is bound by residues D5 and E50.

The protein belongs to the P-Pant transferase superfamily. AcpS family. Mg(2+) serves as cofactor.

It is found in the cytoplasm. The catalysed reaction is apo-[ACP] + CoA = holo-[ACP] + adenosine 3',5'-bisphosphate + H(+). Functionally, transfers the 4'-phosphopantetheine moiety from coenzyme A to a Ser of acyl-carrier-protein. This Nautilia profundicola (strain ATCC BAA-1463 / DSM 18972 / AmH) protein is Holo-[acyl-carrier-protein] synthase.